We begin with the raw amino-acid sequence, 190 residues long: Glutathione peroxidase 2 (190 aa).

U40 is an active-site residue. U40 is a non-standard amino acid (selenocysteine).

It belongs to the glutathione peroxidase family. In terms of assembly, homotetramer. In terms of tissue distribution, exclusively expressed in the stomach and small intestine.

The protein resides in the cytoplasm. It localises to the cytosol. It catalyses the reaction 2 glutathione + H2O2 = glutathione disulfide + 2 H2O. The catalysed reaction is a hydroperoxy polyunsaturated fatty acid + 2 glutathione = a hydroxy polyunsaturated fatty acid + glutathione disulfide + H2O. It carries out the reaction tert-butyl hydroperoxide + 2 glutathione = tert-butanol + glutathione disulfide + H2O. The enzyme catalyses cumene hydroperoxide + 2 glutathione = 2-phenylpropan-2-ol + glutathione disulfide + H2O. It catalyses the reaction (13S)-hydroperoxy-(9Z,11E)-octadecadienoate + 2 glutathione = (13S)-hydroxy-(9Z,11E)-octadecadienoate + glutathione disulfide + H2O. The catalysed reaction is (5S)-hydroperoxy-(6E,8Z,11Z,14Z)-eicosatetraenoate + 2 glutathione = (5S)-hydroxy-(6E,8Z,11Z,14Z)-eicosatetraenoate + glutathione disulfide + H2O. It carries out the reaction (12R)-hydroperoxy-(5Z,8Z,10E,14Z)-eicosatetraenoate + 2 glutathione = (12R)-hydroxy-(5Z,8Z,10E,14Z)-eicosatetraenoate + glutathione disulfide + H2O. The enzyme catalyses (15S)-hydroperoxy-(5Z,8Z,11Z,13E)-eicosatetraenoate + 2 glutathione = (15S)-hydroxy-(5Z,8Z,11Z,13E)-eicosatetraenoate + glutathione disulfide + H2O. In terms of biological role, catalyzes the reduction of hydroperoxides in a glutathione-dependent manner thus regulating cellular redox homeostasis. Can reduce small soluble hydroperoxides such as H2O2, cumene hydroperoxide and tert-butyl hydroperoxide, as well as several fatty acid-derived hydroperoxides. Cannot reduce phosphatidycholine hydroperoxide. The sequence is that of Glutathione peroxidase 2 (GPX2) from Macaca fuscata fuscata (Japanese macaque).